A 1007-amino-acid chain; its full sequence is Sal-like protein 2 (1007 aa).

Positions 1-33 (MSRRKQRKPQQLISDCEGPSASENGDASEEDHP) are disordered. Residues 34–56 (QVCAKCCAQFTDPTEFLAHQNAC) form a C2H2-type 1; atypical zinc finger. Disordered stretches follow at residues 59–121 (DPPV…GEES), 137–177 (GGGL…SGHL), 220–243 (PASP…PLFS), and 286–306 (PFSA…SPAL). Residues 70 to 80 (ENPNNSSASSE) show a composition bias toward low complexity. Positions 99-108 (PPDSGSSVPT) are enriched in polar residues. Positions 151-171 (PLPPESTPAPPPPPPPPPPPG) are enriched in pro residues. Phosphoserine is present on Ser243. 2 C2H2-type zinc fingers span residues 373-395 (HKCR…LRSH) and 401-423 (YKCN…FHRH). Disordered regions lie at residues 520–540 (KNKA…SGVA) and 610–629 (AASG…ASSG). 3 consecutive C2H2-type zinc fingers follow at residues 631 to 653 (NQCV…YGQH), 659 to 681 (FKCK…FVGH), and 691 to 713 (NSCP…VRMH). Residues 714–886 (LGGQIPNGGT…SALTPEGEAT (173 aa)) are disordered. The segment covering 734–744 (ENGSEQSTVSG) has biased composition (polar residues). The span at 747–757 (SFPQQQSQQPS) shows a compositional bias: low complexity. The span at 758 to 782 (PEEELSEEEEEEDEEEEEDVTDEDS) shows a compositional bias: acidic residues. Residues Ser797, Ser802, and Ser806 each carry the phosphoserine modification. Acidic residues predominate over residues 803-812 (EEASGAEEEV). The span at 862 to 871 (GKEEGGKPER) shows a compositional bias: basic and acidic residues. Lys911 participates in a covalent cross-link: Glycyl lysine isopeptide (Lys-Gly) (interchain with G-Cter in ubiquitin). C2H2-type zinc fingers lie at residues 911–933 (KACE…QKTH) and 940–963 (FTCV…LLAH).

It belongs to the sal C2H2-type zinc-finger protein family. Highest levels in adult brain (in different areas). Lower levels in heart; very low levels in kidney and pancreas. Expressed throughout the retina and lens vesicle as well as the periocular mesenchyme.

It localises to the nucleus. Probable transcription factor that plays a role in eye development before, during, and after optic fissure closure. The protein is Sal-like protein 2 (SALL2) of Homo sapiens (Human).